Here is a 1755-residue protein sequence, read N- to C-terminus: Transposon Ty1-ML2 Gag-Pol polyprotein (1755 aa).

Positions 1–16 (MESQQLSQHSHISHGS) are enriched in low complexity. Disordered regions lie at residues 1-93 (MESQ…MMTQ), 126-173 (PQSQ…RPPP), and 352-421 (GSRN…SKST). Composition is skewed to polar residues over residues 48 to 60 (TKAN…TPAS) and 127 to 152 (QSQF…GNTF). The segment covering 153-165 (TDSSSADSDMTST) has biased composition (low complexity). The tract at residues 299–401 (NNGIHINNKV…NSKSKTARAH (103 aa)) is RNA-binding. Over residues 402–418 (NVSTSNNSPSTDNDSIS) the composition is skewed to low complexity. Phosphoserine is present on Ser416. Asp461 serves as the catalytic For protease activity; shared with dimeric partner. Residues 583–640 (NVHTSESTRKYPYPFIHRMLAHANAQTIRYSLKNNTITYFNESDVDRSSAIDYQCPDC) form an integrase-type zinc finger-like region. The 176-residue stretch at 660-835 (NSYEPFQYLH…AGLDISTLLP (176 aa)) folds into the Integrase catalytic domain. Asp671 and Asp736 together coordinate Mg(2+). 3 disordered regions span residues 956 to 1087 (SKAV…ETEK), 1092 to 1111 (RSPS…NIVP), and 1130 to 1171 (DLPL…DSNA). The segment covering 960–969 (SPTDSTPPST) has biased composition (low complexity). The segment covering 1005–1015 (STPQISNIEST) has biased composition (polar residues). The span at 1038 to 1053 (ESSHASKSKDFRHSDS) shows a compositional bias: basic and acidic residues. 2 stretches are compositionally biased toward polar residues: residues 1054 to 1082 (YSEN…QISD) and 1101 to 1111 (PENNSSHNIVP). Positions 1178 to 1212 (KKRSLEDNETEIKVSRDTWNTKNMRSLEPPRSKKR) match the Bipartite nuclear localization signal motif. Residues 1338–1476 (NNYYITQLDI…DILGLEIKYQ (139 aa)) form the Reverse transcriptase Ty1/copia-type domain. Mg(2+)-binding residues include Asp1346, Asp1427, Asp1428, Asp1610, Glu1652, and Asp1685. In terms of domain architecture, RNase H Ty1/copia-type spans 1610–1752 (DASYGNQPYY…IKTFKLLTNK (143 aa)).

The capsid protein forms a homotrimer, from which the VLPs are assembled. The protease is a homodimer, whose active site consists of two apposed aspartic acid residues. Post-translationally, initially, virus-like particles (VLPs) are composed of the structural unprocessed proteins Gag and Gag-Pol, and also contain the host initiator methionine tRNA (tRNA(i)-Met) which serves as a primer for minus-strand DNA synthesis, and a dimer of genomic Ty RNA. Processing of the polyproteins occurs within the particle and proceeds by an ordered pathway, called maturation. First, the protease (PR) is released by autocatalytic cleavage of the Gag-Pol polyprotein yielding capsid protein p45 and a Pol-p154 precursor protein. This cleavage is a prerequisite for subsequent processing of Pol-p154 at the remaining sites to release the mature structural and catalytic proteins. Maturation takes place prior to the RT reaction and is required to produce transposition-competent VLPs.

It localises to the cytoplasm. The protein localises to the nucleus. The catalysed reaction is DNA(n) + a 2'-deoxyribonucleoside 5'-triphosphate = DNA(n+1) + diphosphate. It catalyses the reaction Endonucleolytic cleavage to 5'-phosphomonoester.. Its function is as follows. Capsid protein (CA) is the structural component of the virus-like particle (VLP), forming the shell that encapsulates the retrotransposons dimeric RNA genome. The particles are assembled from trimer-clustered units and there are holes in the capsid shells that allow for the diffusion of macromolecules. CA also has nucleocapsid-like chaperone activity, promoting primer tRNA(i)-Met annealing to the multipartite primer-binding site (PBS), dimerization of Ty1 RNA and initiation of reverse transcription. In terms of biological role, the aspartyl protease (PR) mediates the proteolytic cleavages of the Gag and Gag-Pol polyproteins after assembly of the VLP. Reverse transcriptase/ribonuclease H (RT) is a multifunctional enzyme that catalyzes the conversion of the retro-elements RNA genome into dsDNA within the VLP. The enzyme displays a DNA polymerase activity that can copy either DNA or RNA templates, and a ribonuclease H (RNase H) activity that cleaves the RNA strand of RNA-DNA heteroduplexes during plus-strand synthesis and hydrolyzes RNA primers. The conversion leads to a linear dsDNA copy of the retrotransposon that includes long terminal repeats (LTRs) at both ends. Functionally, integrase (IN) targets the VLP to the nucleus, where a subparticle preintegration complex (PIC) containing at least integrase and the newly synthesized dsDNA copy of the retrotransposon must transit the nuclear membrane. Once in the nucleus, integrase performs the integration of the dsDNA into the host genome. This chain is Transposon Ty1-ML2 Gag-Pol polyprotein (TY1B-ML2), found in Saccharomyces cerevisiae (strain ATCC 204508 / S288c) (Baker's yeast).